We begin with the raw amino-acid sequence, 487 residues long: uncharacterized protein (487 aa).

3 helical membrane-spanning segments follow: residues 10–30 (AALM…AADA), 45–65 (VISP…AVAA), and 439–459 (APVV…DFTL).

It localises to the cell membrane. This is an uncharacterized protein from Mycobacterium tuberculosis (strain CDC 1551 / Oshkosh).